We begin with the raw amino-acid sequence, 232 residues long: Ribonuclease P protein component 3 (232 aa).

Belongs to the eukaryotic/archaeal RNase P protein component 3 family. As to quaternary structure, consists of a catalytic RNA component and at least 4-5 protein subunits.

It localises to the cytoplasm. The enzyme catalyses Endonucleolytic cleavage of RNA, removing 5'-extranucleotides from tRNA precursor.. Functionally, part of ribonuclease P, a protein complex that generates mature tRNA molecules by cleaving their 5'-ends. This chain is Ribonuclease P protein component 3, found in Methanococcus maripaludis (strain C6 / ATCC BAA-1332).